Reading from the N-terminus, the 187-residue chain is Photosystem I assembly protein Ycf4 (187 aa).

2 helical membrane-spanning segments follow: residues 23 to 43 (INYFWSFSIFFGAFGFLIVGI) and 70 to 90 (FYGIAGIFLSFYLWFTMILGV).

This sequence belongs to the Ycf4 family.

It localises to the plastid. The protein resides in the chloroplast thylakoid membrane. Its function is as follows. Seems to be required for the assembly of the photosystem I complex. This chain is Photosystem I assembly protein Ycf4, found in Chara vulgaris (Common stonewort).